A 458-amino-acid chain; its full sequence is Divalent metal cation transporter MntH (458 aa).

The next 11 helical transmembrane spans lie at 38 to 58 (GFWK…VGYM), 86 to 106 (LIAM…GMDL), 119 to 139 (GIFL…AEII), 151 to 171 (IPLL…LLLM), 180 to 200 (AIVA…VILA), 223 to 243 (MLFL…LYLH), 275 to 295 (LTIA…MFYG), 315 to 335 (IVGS…LLAS), 370 to 390 (GLSI…EAQV), 395 to 415 (IYSQ…LTLF), and 436 to 456 (WFVT…TVGL).

Belongs to the NRAMP family.

The protein localises to the cell membrane. H(+)-stimulated, divalent metal cation uptake system. This chain is Divalent metal cation transporter MntH, found in Latilactobacillus sakei subsp. sakei (strain 23K) (Lactobacillus sakei subsp. sakei).